The primary structure comprises 400 residues: CinA-like protein (400 aa).

The protein belongs to the CinA family.

The protein is CinA-like protein of Escherichia coli (strain SMS-3-5 / SECEC).